Consider the following 537-residue polypeptide: Bifunctional purine biosynthesis protein PurH (537 aa).

The MGS-like domain occupies alanine 11–valine 158.

This sequence belongs to the PurH family.

The enzyme catalyses (6R)-10-formyltetrahydrofolate + 5-amino-1-(5-phospho-beta-D-ribosyl)imidazole-4-carboxamide = 5-formamido-1-(5-phospho-D-ribosyl)imidazole-4-carboxamide + (6S)-5,6,7,8-tetrahydrofolate. It catalyses the reaction IMP + H2O = 5-formamido-1-(5-phospho-D-ribosyl)imidazole-4-carboxamide. Its pathway is purine metabolism; IMP biosynthesis via de novo pathway; 5-formamido-1-(5-phospho-D-ribosyl)imidazole-4-carboxamide from 5-amino-1-(5-phospho-D-ribosyl)imidazole-4-carboxamide (10-formyl THF route): step 1/1. It participates in purine metabolism; IMP biosynthesis via de novo pathway; IMP from 5-formamido-1-(5-phospho-D-ribosyl)imidazole-4-carboxamide: step 1/1. This Parvibaculum lavamentivorans (strain DS-1 / DSM 13023 / NCIMB 13966) protein is Bifunctional purine biosynthesis protein PurH.